Reading from the N-terminus, the 382-residue chain is Mannitol-1-phosphate 5-dehydrogenase (382 aa).

3 to 14 contributes to the NAD(+) binding site; sequence ALHFGAGNIGRG.

It belongs to the mannitol dehydrogenase family.

It carries out the reaction D-mannitol 1-phosphate + NAD(+) = beta-D-fructose 6-phosphate + NADH + H(+). The sequence is that of Mannitol-1-phosphate 5-dehydrogenase from Salmonella newport (strain SL254).